We begin with the raw amino-acid sequence, 494 residues long: Nuclear distribution protein PAC1 (494 aa).

The LisH domain maps to Q14 to R46. Residues N90–L123 adopt a coiled-coil conformation. WD repeat units lie at residues N153–A192, S196–Q244, G251–T292, P295–T334, H347–H395, G415–E454, and H457–F492.

The protein belongs to the WD repeat LIS1/nudF family. In terms of assembly, self-associates. Interacts with NDL1 and dynein.

Its subcellular location is the cytoplasm. It localises to the cytoskeleton. It is found in the spindle pole. Functionally, positively regulates the activity of the minus-end directed microtubule motor protein dynein. Plays a central role in positioning the mitotic spindle at the bud neck during cell division. Targets cytoplasmic dynein to microtubule plus ends, thereby promoting dynein-mediated microtubule sliding along the bud cortex and consequently the movement of the mitotic spindle to the bud neck. This Saccharomyces cerevisiae (strain Lalvin EC1118 / Prise de mousse) (Baker's yeast) protein is Nuclear distribution protein PAC1.